A 119-amino-acid polypeptide reads, in one-letter code: HTH-type transcriptional regulator SarX (119 aa).

The H-T-H motif DNA-binding region spans 55-78 (LKTAMDELDLSRTKLLVSIRRLIE).

The protein belongs to the SarA family.

The protein resides in the cytoplasm. Its function is as follows. Involved in the regulation of virulence genes. Acts as a repressor of the agr locus and consequently targets genes regulated by the agr system such as sspA, hla and hlb. Binds directly to the agr promoter region. This is HTH-type transcriptional regulator SarX (sarX) from Staphylococcus aureus (strain bovine RF122 / ET3-1).